A 469-amino-acid polypeptide reads, in one-letter code: 6-phosphofructo-2-kinase/fructose-2,6-bisphosphatase 4 (469 aa).

Positions 1–249 (MASPRELTQN…YYLMNIHVTP (249 aa)) are 6-phosphofructo-2-kinase. Residue 46–54 (GLPARGKTY) coordinates ATP. Arg-79 and Arg-103 together coordinate beta-D-fructose 6-phosphate. Asp-129 is a catalytic residue. Residues Thr-131 and Arg-137 each contribute to the beta-D-fructose 6-phosphate site. Cys-159 is an active-site residue. 168–173 (NIVQVK) provides a ligand contact to ATP. Lys-173, Arg-194, and Tyr-198 together coordinate beta-D-fructose 6-phosphate. The fructose-2,6-bisphosphatase stretch occupies residues 250–469 (RSIYLCRHGE…EALVTVPAHQ (220 aa)). Arg-256 lines the beta-D-fructose 2,6-bisphosphate pocket. The Tele-phosphohistidine intermediate role is filled by His-257. 3 residues coordinate beta-D-fructose 2,6-bisphosphate: Asn-263, Gly-269, and Arg-306. Glu-326 serves as the catalytic Proton donor/acceptor. Beta-D-fructose 2,6-bisphosphate contacts are provided by Tyr-337, Arg-351, Lys-355, Tyr-366, Gln-392, and Arg-396. 348–351 (FALR) contributes to the ATP binding site. ATP is bound by residues 392–396 (QAVMR) and Tyr-428. Thr-444 bears the Phosphothreonine; by PKC mark.

It in the C-terminal section; belongs to the phosphoglycerate mutase family. In terms of assembly, homodimer.

It catalyses the reaction beta-D-fructose 2,6-bisphosphate + H2O = beta-D-fructose 6-phosphate + phosphate. The enzyme catalyses beta-D-fructose 6-phosphate + ATP = beta-D-fructose 2,6-bisphosphate + ADP + H(+). Its activity is regulated as follows. The most important regulatory mechanism of these opposing activities is by phosphorylation and dephosphorylation of the enzyme. Its function is as follows. Synthesis and degradation of fructose 2,6-bisphosphate. The protein is 6-phosphofructo-2-kinase/fructose-2,6-bisphosphatase 4 (PFKFB4) of Homo sapiens (Human).